Reading from the N-terminus, the 82-residue chain is Small ribosomal subunit protein uS17 (82 aa).

This sequence belongs to the universal ribosomal protein uS17 family. In terms of assembly, part of the 30S ribosomal subunit.

Functionally, one of the primary rRNA binding proteins, it binds specifically to the 5'-end of 16S ribosomal RNA. This chain is Small ribosomal subunit protein uS17, found in Shewanella frigidimarina (strain NCIMB 400).